The sequence spans 290 residues: PIH1 domain-containing protein 1 (290 aa).

Phosphoserine occurs at positions 12, 16, and 173.

It belongs to the PIH1 family. In terms of assembly, component of the R2TP complex composed at least of RUVBL1, RUVBL2, RPAP3 and PIHD1. Component of the PAQosome complex which is responsible for the biogenesis of several protein complexes and which consists of R2TP complex members RUVBL1, RUVBL2, RPAP3 and PIH1D1, URI complex members PFDN2, PFDN6, PDRG1, UXT and URI1 as well as ASDURF, POLR2E and DNAAF10/WDR92. Interacts with phosphorylated TELO2 and mediates interaction of TELO2 with the R2TP complex. Interacts with phosphorylated ECD, EFTUD2/SNRP116, RPB1 and UBR5 and with RPB1 in a phosphorylation-independent manner. Interacts with the core C/D box snoRNP particle components NOP58 and FBL and with RUVBL1/TIP49. Interacts with RPAP3 and DNAAF10. Interacts with histone H4 and with SWI/SNF complex member SMARCB1/SNF5. Interacts with the mTORC1 complex member RPTOR. Interacts with MSL1.

It localises to the nucleus. Involved in the assembly of C/D box small nucleolar ribonucleoprotein (snoRNP) particles. Recruits the SWI/SNF complex to the core promoter of rRNA genes and enhances pre-rRNA transcription. Mediates interaction of TELO2 with the R2TP complex which is necessary for the stability of MTOR and SMG1. Positively regulates the assembly and activity of the mTORC1 complex. This chain is PIH1 domain-containing protein 1 (Pih1d1), found in Rattus norvegicus (Rat).